The primary structure comprises 545 residues: Thermosome subunit beta (545 aa).

The protein belongs to the TCP-1 chaperonin family. In terms of assembly, forms a Heterooligomeric complex of two stacked eight-membered rings.

In terms of biological role, molecular chaperone; binds unfolded polypeptides in vitro, and has a weak ATPase activity. This is Thermosome subunit beta (thsB) from Archaeoglobus fulgidus (strain ATCC 49558 / DSM 4304 / JCM 9628 / NBRC 100126 / VC-16).